The primary structure comprises 246 residues: 1-(5-phosphoribosyl)-5-[(5-phosphoribosylamino)methylideneamino] imidazole-4-carboxamide isomerase (246 aa).

D7 acts as the Proton acceptor in catalysis. Catalysis depends on D129, which acts as the Proton donor.

Belongs to the HisA/HisF family.

Its subcellular location is the cytoplasm. It catalyses the reaction 1-(5-phospho-beta-D-ribosyl)-5-[(5-phospho-beta-D-ribosylamino)methylideneamino]imidazole-4-carboxamide = 5-[(5-phospho-1-deoxy-D-ribulos-1-ylimino)methylamino]-1-(5-phospho-beta-D-ribosyl)imidazole-4-carboxamide. It functions in the pathway amino-acid biosynthesis; L-histidine biosynthesis; L-histidine from 5-phospho-alpha-D-ribose 1-diphosphate: step 4/9. The protein is 1-(5-phosphoribosyl)-5-[(5-phosphoribosylamino)methylideneamino] imidazole-4-carboxamide isomerase of Buchnera aphidicola subsp. Acyrthosiphon pisum (strain 5A).